We begin with the raw amino-acid sequence, 291 residues long: MQLKKAFWKLASLLPXSLLLFLGGCDKKLAVLNPQGPVAKAQYDLIVWSFLLMSLIIAIVFILFTVILIRYREKPENMDYEPPEQHGNTLLEIIWTLVPVIIVIALSIPTVKATYASEEVPKESKHIKPVEIYVTSANWKWLFSYPEEKIETVNYLNIPAGVPIQFKLTSVGPMNAFWVPELGGMKYTMDGMIMDLYLQADKPGSYLGRSANFSGEGFTHMEFEVEAKTKEKYDKWVKEVQQTAPKLTEDKYNEIVKPGVVGRMTFSSHHLSYVDPKSLEYCDYNYYKNKK.

An N-terminal signal peptide occupies residues 1–28; sequence MQLKKAFWKLASLLPXSLLLFLGGCDKK. Transmembrane regions (helical) follow at residues 49-69 and 91-111; these read SFLL…VILI and LEII…IPTV.

The protein belongs to the cytochrome c oxidase subunit 2 family.

It is found in the cell membrane. It carries out the reaction 2 a quinol + O2 = 2 a quinone + 2 H2O. Functionally, catalyzes quinol oxidation with the concomitant reduction of oxygen to water. Subunit II transfers the electrons from a quinol to the binuclear center of the catalytic subunit I. This is Quinol oxidase subunit 2 from Bacillus cereus (strain ATCC 10987 / NRS 248).